Reading from the N-terminus, the 101-residue chain is Large ribosomal subunit protein eL21 (101 aa).

Basic residues predominate over residues 1 to 18; sequence MVKHSRGYRTRSRSLLRK. The interval 1-23 is disordered; that stretch reads MVKHSRGYRTRSRSLLRKSPRER.

Belongs to the eukaryotic ribosomal protein eL21 family.

This Saccharolobus islandicus (strain Y.N.15.51 / Yellowstone #2) (Sulfolobus islandicus) protein is Large ribosomal subunit protein eL21.